A 282-amino-acid chain; its full sequence is Probable metal transport system membrane protein TM_0125 (282 aa).

9 helical membrane passes run 33–53, 58–78, 79–99, 109–129, 148–168, 184–204, 210–230, 234–254, and 259–279; these read AFVGGILVASLSGLVSPIVVF, FIGDGTAHAVFAGLAAATLIG, ADHRLIAFATALLFAFAVSLF, AIGILLPFFMAVGVVLFSVSG, STDVAITAVVLALSVILTVVF, FYGIKTDLIRFLITSFIAITV, VVGVILTGALLILPGLVSKIF, FWSLTTISVIFSTGVFFAGFL, and LDLPPGPVIVIIAFVSFLPML.

It belongs to the ABC-3 integral membrane protein family.

The protein localises to the cell inner membrane. In terms of biological role, part of an ATP-driven transport system TM_0123/TM_0124/TM_0125 for a metal. The chain is Probable metal transport system membrane protein TM_0125 from Thermotoga maritima (strain ATCC 43589 / DSM 3109 / JCM 10099 / NBRC 100826 / MSB8).